Consider the following 259-residue polypeptide: Probable ABC transporter permease protein RP096 (259 aa).

Helical transmembrane passes span 13–35, 49–69, 148–168, 195–215, and 237–257; these read TIKFAQSVGIFSLFSFIAISSII, LFIGFHSLPVVAMTTFFSGAV, VIAAIITMPCLVLIGDIIGVM, PIDVISGLIKATVFGFIISII, and AVVNSSILILISNYLITELFF.

Belongs to the MlaE permease family.

It localises to the cell inner membrane. In terms of biological role, could be part of an ABC transporter complex. This Rickettsia prowazekii (strain Madrid E) protein is Probable ABC transporter permease protein RP096.